The sequence spans 219 residues: MSATIRTGLLGGSFNPAHGGHRRISLFALQALRLDEVWWLVSPGNPLKSADGMASHEARYRSALEQARRAPIRVTAIEAQLGTRYTVDTLRTLRGRYPRREFVWLMGADNLATFHRWKAWRDIARTMPIAVVARPGYDKDAIASPAMAWLRGHRTSAAEFRSRGRWSAPTLVTLRFDPDSRSATAIRRADPDWPSRYRSGLLFDQVTHRSIFGEREPPA.

This sequence belongs to the NadD family.

It catalyses the reaction nicotinate beta-D-ribonucleotide + ATP + H(+) = deamido-NAD(+) + diphosphate. It participates in cofactor biosynthesis; NAD(+) biosynthesis; deamido-NAD(+) from nicotinate D-ribonucleotide: step 1/1. Functionally, catalyzes the reversible adenylation of nicotinate mononucleotide (NaMN) to nicotinic acid adenine dinucleotide (NaAD). The polypeptide is Probable nicotinate-nucleotide adenylyltransferase (Erythrobacter litoralis (strain HTCC2594)).